The primary structure comprises 201 residues: Recombination protein RecR (201 aa).

The C4-type zinc finger occupies 57–72 (CSDCRTFTEQDVCAIC). One can recognise a Toprim domain in the interval 81–176 (GQICVVESPA…MASRIAHGVP (96 aa)).

The protein belongs to the RecR family.

May play a role in DNA repair. It seems to be involved in an RecBC-independent recombinational process of DNA repair. It may act with RecF and RecO. This chain is Recombination protein RecR, found in Pectobacterium carotovorum subsp. carotovorum (strain PC1).